The chain runs to 117 residues: Transcription elongation factor A protein-like 8 (117 aa).

The disordered stretch occupies residues 1–82; the sequence is MQKSCDENEG…EEVIRGVDEL (82 aa). The segment covering 41-82 has biased composition (basic and acidic residues); that stretch reads NVREETEGSHRGEPAEPSPEPKEDTPARHLNPEEVIRGVDEL. The stretch at 73 to 100 forms a coiled coil; it reads EEVIRGVDELERLREEIRRVRNKFVLMH.

Belongs to the TFS-II family. TFA subfamily.

Its subcellular location is the nucleus. Its function is as follows. May be involved in transcriptional regulation. In Mus musculus (Mouse), this protein is Transcription elongation factor A protein-like 8 (Tceal8).